The primary structure comprises 453 residues: Probable exopolygalacturonase B (453 aa).

Positions 1 to 16 (MKFFALAALFASTVNS) are cleaved as a signal peptide. Residues N185 and N225 are each glycosylated (N-linked (GlcNAc...) asparagine). The Proton donor role is filled by D255. The cysteines at positions 257 and 274 are disulfide-linked. N263 and N275 each carry an N-linked (GlcNAc...) asparagine glycan. The active site involves H278. PbH1 repeat units lie at residues 295–316 (IENV…RLKA) and 327–348 (INNV…VLDQ). N-linked (GlcNAc...) asparagine glycans are attached at residues N302, N329, N354, and N366. The stretch at 362–405 (PSRVNFTNIVFEDIYGTSSGKRGKVVADLTCSPNAVCSGIRLKN) is one PbH1 3 repeat. C392 and C398 form a disulfide bridge. A glycan (N-linked (GlcNAc...) asparagine) is linked at N436.

This sequence belongs to the glycosyl hydrolase 28 family.

It localises to the secreted. The catalysed reaction is [(1-&gt;4)-alpha-D-galacturonosyl](n) + H2O = alpha-D-galacturonate + [(1-&gt;4)-alpha-D-galacturonosyl](n-1). Specific in hydrolyzing the terminal glycosidic bond of polygalacturonic acid and oligogalacturonates. The polypeptide is Probable exopolygalacturonase B (pgxB) (Aspergillus fumigatus (strain CBS 144.89 / FGSC A1163 / CEA10) (Neosartorya fumigata)).